The chain runs to 62 residues: Mu-conotoxin Lt5d (62 aa).

An N-terminal signal peptide occupies residues 1–22 (MRCLPVFIILLLLIPSAPSVDA). The propeptide occupies 23-48 (QPTTKDDVPLASLHDNAKRALQMFWN).

Belongs to the conotoxin T superfamily. Post-translationally, contains 2 disulfide bonds that can be either 'C1-C3, C2-C4' or 'C1-C4, C2-C3', since these disulfide connectivities have been observed for conotoxins with cysteine framework V (for examples, see AC P0DQQ7 and AC P81755). Expressed by the venom duct.

The protein resides in the secreted. Its function is as follows. Mu-conotoxins block voltage-gated sodium channels (Nav). This toxin inhibits tetrodotoxin(TTX)-sensitive sodium channels, but does not affect TTX-resistant sodium channels. Reduces the amplitude of currents without changing the activation and inactivation kinetics of currents. This chain is Mu-conotoxin Lt5d, found in Conus litteratus (Lettered cone).